The sequence spans 87 residues: Polyketide-8 synthase acyl carrier protein 2 (87 aa).

The region spanning 8 to 83 (ALDKEQLREL…GTYELLTSKL (76 aa)) is the Carrier domain. Serine 43 is modified (O-(pantetheine 4'-phosphoryl)serine).

Post-translationally, 4'-phosphopantetheine is transferred from CoA to a specific serine of the apo-ACP-like protein.

In terms of biological role, acyl carrier protein. The chain is Polyketide-8 synthase acyl carrier protein 2 from Streptomyces avermitilis (strain ATCC 31267 / DSM 46492 / JCM 5070 / NBRC 14893 / NCIMB 12804 / NRRL 8165 / MA-4680).